The primary structure comprises 360 residues: Putative FBD-associated F-box protein At5g56430 (360 aa).

One can recognise an F-box domain in the interval 1 to 53 (MRNISDLPNDLLVKILSLIPIKVAASTSLLSKRWGSVWKLIPTLDYDGTYSAA). 2 Kelch repeats span residues 140 to 186 (IRYT…EQLD) and 235 to 285 (VMCS…SVPE). One can recognise an FBD domain in the interval 276–326 (KWEQPNSVPECLLVSLETVKWILYKGTQEEKDVVKYLLKNGNFIKTMSIRF).

The sequence is that of Putative FBD-associated F-box protein At5g56430 from Arabidopsis thaliana (Mouse-ear cress).